Consider the following 504-residue polypeptide: Aspartyl/glutamyl-tRNA(Asn/Gln) amidotransferase subunit B (504 aa).

Belongs to the GatB/GatE family. GatB subfamily. As to quaternary structure, heterotrimer of A, B and C subunits.

The catalysed reaction is L-glutamyl-tRNA(Gln) + L-glutamine + ATP + H2O = L-glutaminyl-tRNA(Gln) + L-glutamate + ADP + phosphate + H(+). It carries out the reaction L-aspartyl-tRNA(Asn) + L-glutamine + ATP + H2O = L-asparaginyl-tRNA(Asn) + L-glutamate + ADP + phosphate + 2 H(+). Functionally, allows the formation of correctly charged Asn-tRNA(Asn) or Gln-tRNA(Gln) through the transamidation of misacylated Asp-tRNA(Asn) or Glu-tRNA(Gln) in organisms which lack either or both of asparaginyl-tRNA or glutaminyl-tRNA synthetases. The reaction takes place in the presence of glutamine and ATP through an activated phospho-Asp-tRNA(Asn) or phospho-Glu-tRNA(Gln). The polypeptide is Aspartyl/glutamyl-tRNA(Asn/Gln) amidotransferase subunit B (Rhodococcus opacus (strain B4)).